Here is a 560-residue protein sequence, read N- to C-terminus: Trans-activating transcriptional regulatory protein (560 aa).

Disordered stretches follow at residues methionine 1–asparagine 25 and threonine 99–lysine 134.

The protein belongs to the nucleopolyhedrovirus IE-1 protein family.

Functionally, regulatory transcriptional protein, which trans-activates gene expression from early baculovirus promoters. Can also trans-activate its own promoter, suggesting that it is autoregulated during normal infection of insect cells. This Orgyia pseudotsugata (Douglas-fir tussock moth) protein is Trans-activating transcriptional regulatory protein (IE1).